The following is a 39-amino-acid chain: Photosystem II reaction center protein J (39 aa).

A helical transmembrane segment spans residues 9-29; it reads LWLVATVGGMAAITVLGIFIY.

This sequence belongs to the PsbJ family. PSII is composed of 1 copy each of membrane proteins PsbA, PsbB, PsbC, PsbD, PsbE, PsbF, PsbH, PsbI, PsbJ, PsbK, PsbL, PsbM, PsbT, PsbX, PsbY, PsbZ, Psb30/Ycf12, at least 3 peripheral proteins of the oxygen-evolving complex and a large number of cofactors. It forms dimeric complexes.

The protein localises to the plastid. Its subcellular location is the chloroplast thylakoid membrane. Its function is as follows. One of the components of the core complex of photosystem II (PSII). PSII is a light-driven water:plastoquinone oxidoreductase that uses light energy to abstract electrons from H(2)O, generating O(2) and a proton gradient subsequently used for ATP formation. It consists of a core antenna complex that captures photons, and an electron transfer chain that converts photonic excitation into a charge separation. In Porphyra purpurea (Red seaweed), this protein is Photosystem II reaction center protein J.